Here is a 38-residue protein sequence, read N- to C-terminus: uncharacterized protein (38 aa).

This is an uncharacterized protein from Saccharomyces cerevisiae (strain ATCC 204508 / S288c) (Baker's yeast).